We begin with the raw amino-acid sequence, 639 residues long: Synaptotagmin-16 (639 aa).

Polar residues predominate over residues 95-119 (NSDLQDSVQTASPTLGQQAEDSSSV). Residues 95-191 (NSDLQDSVQT…SSESDEDVTK (97 aa)) form a disordered region. Pro residues predominate over residues 121–134 (PPWPSKIPGAPKPQ). A compositionally biased stretch (basic and acidic residues) spans 142 to 151 (EEDHHSERQR). A compositionally biased stretch (acidic residues) spans 174 to 187 (GDDEEPSTSSESDE). Residues 344–463 (KCGDLDVIFE…HPEGEMKVTL (120 aa)) enclose the C2 1 domain. Positions 470–496 (NLSSGESPLSPSVVSHSDSASSTQSLS) are disordered. Low complexity predominate over residues 476-496 (SPLSPSVVSHSDSASSTQSLS). Positions 499–634 (GVPELLVGLS…SKGQQTCRWH (136 aa)) constitute a C2 2 domain.

It belongs to the synaptotagmin family. Homodimer. Can also form heterodimers. In terms of tissue distribution, highly expressed in heart and testis. Moderately expressed in kidney.

May be involved in the trafficking and exocytosis of secretory vesicles in non-neuronal tissues. Is Ca(2+)-independent. The polypeptide is Synaptotagmin-16 (Syt16) (Mus musculus (Mouse)).